Reading from the N-terminus, the 287-residue chain is Inhibitory synaptic factor 1 (287 aa).

The interval 1 to 22 is disordered; that stretch reads MSQSRAPAREPSETPSQREQIR. The stretch at 25 to 58 forms a coiled coil; that stretch reads MKMVIQQLEGILKELKDVAHELREVVGQIDKLTS. Disordered stretches follow at residues 113–174 and 189–287; these read RRSA…GTRE and CDDD…NKDL. The segment covering 153–167 has biased composition (low complexity); sequence EEASSSTHSQSQKTS. The segment covering 189 to 209 has biased composition (acidic residues); sequence CDDDEDEDEDEDGRDEEEDKL. Residues 259-274 are compositionally biased toward polar residues; the sequence is RNSSTQTVSDKSTQTL.

The protein belongs to the INSYN1 family.

It is found in the postsynaptic density. Its function is as follows. May be a component of the protein machinery at the inhibitory synapses, probably acting as a scaffold. This chain is Inhibitory synaptic factor 1, found in Danio rerio (Zebrafish).